Reading from the N-terminus, the 73-residue chain is Homeodomain-only protein (73 aa).

Positions A3 to E62 form a DNA-binding region, homeobox; degenerate.

Interacts with serum response factor (SRF). Component of a large complex containing histone deacetylases such as HDAC2. Interacts with the acetylated forms of HSPA1A and HSPA1B. Interacts with HSPA8. Expressed in the embryonic and adult heart and in the adult brain, liver, lung, skeletal muscle, intestine and spleen. Throughout embryonic and postnatal development, it is expressed in the myocardium.

The protein localises to the nucleus. The protein resides in the cytoplasm. Functionally, atypical homeodomain protein which does not bind DNA and is required to modulate cardiac growth and development. Acts via its interaction with SRF, thereby modulating the expression of SRF-dependent cardiac-specific genes and cardiac development. Prevents SRF-dependent transcription either by inhibiting SRF binding to DNA or by recruiting histone deacetylase (HDAC) proteins that prevent transcription by SRF. Overexpression causes cardiac hypertrophy. Acts as a co-chaperone for HSPA1A and HSPA1B chaperone proteins and assists in chaperone-mediated protein refolding. This chain is Homeodomain-only protein (Hopx), found in Mus musculus (Mouse).